The chain runs to 255 residues: MLQISHLYADYGGKPALEDINLTLESGELLVVLGPSGCGKTTLLNLIAGFVPYQHGSIQLAGKGIQGPGAERGVVFQNEGLLPWRNVQDNVAFGLQLAGVEKMQRLEIAHQMVKKVGLEGAEKRYIWQLSGGQRQRVGIARALAANPQLLLLDEPFGALDAFTRDQMQTLLLKLWQETGKQVLLITHDIEEAVFMATELVLLSPGPGRVLERLPLNFARRFVAGESSRSIKSDPQFIAMREYVLSRVFEQREAFS.

An ABC transporter domain is found at 2-229; the sequence is LQISHLYADY…RFVAGESSRS (228 aa). 34-41 serves as a coordination point for ATP; it reads GPSGCGKT.

The protein belongs to the ABC transporter superfamily. Taurine importer (TC 3.A.1.17.1) family. The complex is composed of two ATP-binding proteins (TauB), two transmembrane proteins (TauC) and a solute-binding protein (TauA).

Its subcellular location is the cell inner membrane. The enzyme catalyses taurine(out) + ATP + H2O = taurine(in) + ADP + phosphate + H(+). In terms of biological role, part of the ABC transporter complex TauABC involved in taurine import. Responsible for energy coupling to the transport system. The polypeptide is Taurine import ATP-binding protein TauB (Escherichia coli O6:K15:H31 (strain 536 / UPEC)).